Reading from the N-terminus, the 451-residue chain is POC1 centriolar protein homolog B (451 aa).

WD repeat units follow at residues 16–55 (GHKA…RAYR), 58–99 (GHKD…SEFK), 101–139 (HTAP…FLYS), 142–181 (RHTH…CVNN), 183–223 (SDSV…LLQH), 226–265 (VHSG…LIYT), and 268–307 (GHTG…LHCK). Phosphoserine is present on Ser-321. The tract at residues 372-394 (PECSPTTTKKKTEDMSDLPSESQ) is disordered. Positions 404–443 (ALEHIMEQLNVLTQTVSILEQRLTLTEDKLKDCLENQQKL) form a coiled coil.

Belongs to the WD repeat POC1 family. As to quaternary structure, interacts with POC1A. Interacts with FAM161A. Interacts with CEP44; the interaction is direct and recruits POC1B to centriolar microtubules. Forms a microtubule-associated complex with POC5, CETN2 and FAM161A. Interacts with CCDC15. Post-translationally, phosphorylated in mitotic cells that may be mediated by CDK1.

The protein resides in the cytoplasm. The protein localises to the cytoskeleton. It is found in the microtubule organizing center. It localises to the centrosome. Its subcellular location is the centriole. The protein resides in the cilium basal body. The protein localises to the spindle pole. Plays an important role in centriole assembly and/or stability and ciliogenesis. Involved in early steps of centriole duplication, as well as in the later steps of centriole length control. Acts in concert with POC1A to ensure centriole integrity and proper mitotic spindle formation. Required for primary cilia formation, ciliary length and also cell proliferation. Required for retinal integrity. Acts as a positive regulator of centriole elongation. In Pongo abelii (Sumatran orangutan), this protein is POC1 centriolar protein homolog B (POC1B).